The primary structure comprises 240 residues: Ubiquinone biosynthesis O-methyltransferase (240 aa).

4 residues coordinate S-adenosyl-L-methionine: Arg-44, Gly-64, Asp-85, and Met-129.

The protein belongs to the methyltransferase superfamily. UbiG/COQ3 family.

The enzyme catalyses a 3-demethylubiquinol + S-adenosyl-L-methionine = a ubiquinol + S-adenosyl-L-homocysteine + H(+). The catalysed reaction is a 3-(all-trans-polyprenyl)benzene-1,2-diol + S-adenosyl-L-methionine = a 2-methoxy-6-(all-trans-polyprenyl)phenol + S-adenosyl-L-homocysteine + H(+). It functions in the pathway cofactor biosynthesis; ubiquinone biosynthesis. Its function is as follows. O-methyltransferase that catalyzes the 2 O-methylation steps in the ubiquinone biosynthetic pathway. The chain is Ubiquinone biosynthesis O-methyltransferase from Photorhabdus laumondii subsp. laumondii (strain DSM 15139 / CIP 105565 / TT01) (Photorhabdus luminescens subsp. laumondii).